The chain runs to 87 residues: Cell division topological specificity factor (87 aa).

This sequence belongs to the MinE family.

Functionally, prevents the cell division inhibition by proteins MinC and MinD at internal division sites while permitting inhibition at polar sites. This ensures cell division at the proper site by restricting the formation of a division septum at the midpoint of the long axis of the cell. The chain is Cell division topological specificity factor from Neisseria gonorrhoeae (strain ATCC 700825 / FA 1090).